The primary structure comprises 296 residues: Telomere repeat-binding factor 4 (296 aa).

Positions Met1 to Ile62 constitute an HTH myb-type domain. Residues Trp28–Val58 constitute a DNA-binding region (H-T-H motif). The H15 domain occupies Asn126–Asp200. The tract at residues Lys197 to Ser232 is disordered. The span at Lys219 to Ser232 shows a compositional bias: polar residues. A coiled-coil region spans residues Lys245–Glu282.

It belongs to the histone H1/H5 family. SMH subfamily.

It localises to the nucleus. The protein resides in the chromosome. In terms of biological role, binds preferentially double-stranded telomeric repeats. The chain is Telomere repeat-binding factor 4 from Arabidopsis thaliana (Mouse-ear cress).